Consider the following 536-residue polypeptide: 2-isopropylmalate synthase (536 aa).

In terms of domain architecture, Pyruvate carboxyltransferase spans valine 8–threonine 273. Residues aspartate 17, histidine 208, histidine 210, and asparagine 244 each contribute to the Mn(2+) site. Positions glutamine 408–leucine 536 are regulatory domain.

It belongs to the alpha-IPM synthase/homocitrate synthase family. LeuA type 1 subfamily. Homodimer. The cofactor is Mn(2+).

Its subcellular location is the cytoplasm. The enzyme catalyses 3-methyl-2-oxobutanoate + acetyl-CoA + H2O = (2S)-2-isopropylmalate + CoA + H(+). Its pathway is amino-acid biosynthesis; L-leucine biosynthesis; L-leucine from 3-methyl-2-oxobutanoate: step 1/4. Its function is as follows. Catalyzes the condensation of the acetyl group of acetyl-CoA with 3-methyl-2-oxobutanoate (2-ketoisovalerate) to form 3-carboxy-3-hydroxy-4-methylpentanoate (2-isopropylmalate). The chain is 2-isopropylmalate synthase from Prochlorococcus marinus (strain MIT 9211).